Here is a 213-residue protein sequence, read N- to C-terminus: Probable nicotinate-nucleotide adenylyltransferase (213 aa).

The protein belongs to the NadD family.

It catalyses the reaction nicotinate beta-D-ribonucleotide + ATP + H(+) = deamido-NAD(+) + diphosphate. Its pathway is cofactor biosynthesis; NAD(+) biosynthesis; deamido-NAD(+) from nicotinate D-ribonucleotide: step 1/1. In terms of biological role, catalyzes the reversible adenylation of nicotinate mononucleotide (NaMN) to nicotinic acid adenine dinucleotide (NaAD). This Pectobacterium atrosepticum (strain SCRI 1043 / ATCC BAA-672) (Erwinia carotovora subsp. atroseptica) protein is Probable nicotinate-nucleotide adenylyltransferase.